Here is a 376-residue protein sequence, read N- to C-terminus: MSSISPFVAIRRDLHKIPELGFQEFKTQQYLLRYIHALPQERLEIQTWKTGIFVKVKGTAPRKMIGYRTDIDGLPIKEETGLPYSSEHEGNMHACGHDVHMSIALGLLTHFAEHPIQDDLLFIFQPAEEGPGGAKPMLESEIMKVWKPDMILALHIAPEYPVGTIATKEGLLFANTSELFIDLKGKGGHAAFPHLANDMVVAACSLVTQLQSIVARNVDPLDSAVITIGKISGGTVQNVIAEHARLEGTIRTLSVDSMKKVKERIEAMVSGIKMAYQCEAEIDYGSMYHQVYNDPELTTEFIQFAENYQGIRFIRCKEAMTGEDFGYMLAEIPGFMFWLGVDSPYGLHHAKLTPNEAAIDQGISFLISYITWKGNN.

Aspartate 70 is an active-site residue. Glutamate 129 functions as the Proton acceptor in the catalytic mechanism.

This sequence belongs to the peptidase M20A family. N-acetyldiaminopimelate deacetylase subfamily.

The catalysed reaction is N-acetyl-(2S,6S)-2,6-diaminopimelate + H2O = (2S,6S)-2,6-diaminopimelate + acetate. It functions in the pathway amino-acid biosynthesis; L-lysine biosynthesis via DAP pathway; LL-2,6-diaminopimelate from (S)-tetrahydrodipicolinate (acetylase route): step 3/3. Catalyzes the conversion of N-acetyl-diaminopimelate to diaminopimelate and acetate. The polypeptide is N-acetyldiaminopimelate deacetylase (Geobacillus sp. (strain WCH70)).